Here is a 273-residue protein sequence, read N- to C-terminus: Phosphatidylglycerol--prolipoprotein diacylglyceryl transferase (273 aa).

7 helical membrane passes run Val21–Ala41, Leu60–Tyr80, Val95–Trp115, Phe124–Met144, Ser176–Ile196, Gly203–Val223, and Ile237–Trp257. An a 1,2-diacyl-sn-glycero-3-phospho-(1'-sn-glycerol)-binding site is contributed by Arg143.

This sequence belongs to the Lgt family.

The protein localises to the cell inner membrane. The catalysed reaction is L-cysteinyl-[prolipoprotein] + a 1,2-diacyl-sn-glycero-3-phospho-(1'-sn-glycerol) = an S-1,2-diacyl-sn-glyceryl-L-cysteinyl-[prolipoprotein] + sn-glycerol 1-phosphate + H(+). It functions in the pathway protein modification; lipoprotein biosynthesis (diacylglyceryl transfer). Catalyzes the transfer of the diacylglyceryl group from phosphatidylglycerol to the sulfhydryl group of the N-terminal cysteine of a prolipoprotein, the first step in the formation of mature lipoproteins. The chain is Phosphatidylglycerol--prolipoprotein diacylglyceryl transferase from Vibrio parahaemolyticus serotype O3:K6 (strain RIMD 2210633).